Here is a 123-residue protein sequence, read N- to C-terminus: Immunoglobulin lambda variable 5-45 (123 aa).

The signal sequence occupies residues 1-19 (MAWTPLLLLFLSHCTGSLS). Residues 20–44 (QAVLTQPSSLSASPGASASLTCTLC) form a framework-1 region. The region spanning 20–123 (QAVLTQPSSL…YCMIWHSSAS (104 aa)) is the Ig-like domain. A disulfide bridge connects residues C41 and C115. The interval 45–53 (SGINVGTYR) is complementarity-determining-1. Residues 54–70 (IYWYQQKPGSPPQYLLR) are framework-2. The tract at residues 68 to 92 (LLRYKSDSDKQQGSGVPSRFSGSKD) is disordered. Positions 71 to 77 (YKSDSDK) are complementarity-determining-2. A compositionally biased stretch (polar residues) spans 78 to 92 (QQGSGVPSRFSGSKD). The tract at residues 78 to 115 (QQGSGVPSRFSGSKDASANAGILLISGLQSEDEADYYC) is framework-3. The segment at 116 to 123 (MIWHSSAS) is complementarity-determining-3.

In terms of assembly, immunoglobulins are composed of two identical heavy chains and two identical light chains; disulfide-linked.

The protein resides in the secreted. Its subcellular location is the cell membrane. Functionally, v region of the variable domain of immunoglobulin light chains that participates in the antigen recognition. Immunoglobulins, also known as antibodies, are membrane-bound or secreted glycoproteins produced by B lymphocytes. In the recognition phase of humoral immunity, the membrane-bound immunoglobulins serve as receptors which, upon binding of a specific antigen, trigger the clonal expansion and differentiation of B lymphocytes into immunoglobulins-secreting plasma cells. Secreted immunoglobulins mediate the effector phase of humoral immunity, which results in the elimination of bound antigens. The antigen binding site is formed by the variable domain of one heavy chain, together with that of its associated light chain. Thus, each immunoglobulin has two antigen binding sites with remarkable affinity for a particular antigen. The variable domains are assembled by a process called V-(D)-J rearrangement and can then be subjected to somatic hypermutations which, after exposure to antigen and selection, allow affinity maturation for a particular antigen. In Homo sapiens (Human), this protein is Immunoglobulin lambda variable 5-45.